The chain runs to 423 residues: Gamma-glutamyl phosphate reductase 2 (423 aa).

Belongs to the gamma-glutamyl phosphate reductase family.

The protein localises to the cytoplasm. The enzyme catalyses L-glutamate 5-semialdehyde + phosphate + NADP(+) = L-glutamyl 5-phosphate + NADPH + H(+). The protein operates within amino-acid biosynthesis; L-proline biosynthesis; L-glutamate 5-semialdehyde from L-glutamate: step 2/2. Catalyzes the NADPH-dependent reduction of L-glutamate 5-phosphate into L-glutamate 5-semialdehyde and phosphate. The product spontaneously undergoes cyclization to form 1-pyrroline-5-carboxylate. The polypeptide is Gamma-glutamyl phosphate reductase 2 (Bacillus licheniformis (strain ATCC 14580 / DSM 13 / JCM 2505 / CCUG 7422 / NBRC 12200 / NCIMB 9375 / NCTC 10341 / NRRL NRS-1264 / Gibson 46)).